We begin with the raw amino-acid sequence, 50 residues long: Photosystem II reaction center protein M (50 aa).

The helical transmembrane segment at 7–27 (GFVASLLFVGVPTIFLIGLFI) threads the bilayer.

The protein belongs to the PsbM family. In terms of assembly, PSII is composed of 1 copy each of membrane proteins PsbA, PsbB, PsbC, PsbD, PsbE, PsbF, PsbH, PsbI, PsbJ, PsbK, PsbL, PsbM, PsbT, PsbX, PsbY, Psb30/Ycf12, peripheral proteins PsbO, CyanoQ (PsbQ), PsbU, PsbV and a large number of cofactors. It forms dimeric complexes.

It localises to the cellular thylakoid membrane. Its function is as follows. One of the components of the core complex of photosystem II (PSII). PSII is a light-driven water:plastoquinone oxidoreductase that uses light energy to abstract electrons from H(2)O, generating O(2) and a proton gradient subsequently used for ATP formation. It consists of a core antenna complex that captures photons, and an electron transfer chain that converts photonic excitation into a charge separation. This subunit is found at the monomer-monomer interface. The chain is Photosystem II reaction center protein M from Prochlorococcus marinus (strain MIT 9515).